Here is a 396-residue protein sequence, read N- to C-terminus: 1-deoxy-D-xylulose 5-phosphate reductoisomerase (396 aa).

The NADPH site is built by T15, G16, S17, I18, G41, and N129. K130 lines the 1-deoxy-D-xylulose 5-phosphate pocket. E131 lines the NADPH pocket. D155 serves as a coordination point for Mn(2+). 1-deoxy-D-xylulose 5-phosphate is bound by residues S156, E157, S182, and H205. E157 lines the Mn(2+) pocket. Residue G211 participates in NADPH binding. 1-deoxy-D-xylulose 5-phosphate is bound by residues S218, N223, K224, and E227. E227 serves as a coordination point for Mn(2+).

It belongs to the DXR family. Mg(2+) serves as cofactor. Mn(2+) is required as a cofactor.

The catalysed reaction is 2-C-methyl-D-erythritol 4-phosphate + NADP(+) = 1-deoxy-D-xylulose 5-phosphate + NADPH + H(+). It participates in isoprenoid biosynthesis; isopentenyl diphosphate biosynthesis via DXP pathway; isopentenyl diphosphate from 1-deoxy-D-xylulose 5-phosphate: step 1/6. Catalyzes the NADPH-dependent rearrangement and reduction of 1-deoxy-D-xylulose-5-phosphate (DXP) to 2-C-methyl-D-erythritol 4-phosphate (MEP). This chain is 1-deoxy-D-xylulose 5-phosphate reductoisomerase, found in Xanthomonas oryzae pv. oryzae (strain MAFF 311018).